The chain runs to 121 residues: Large ribosomal subunit protein bL19 (121 aa).

It belongs to the bacterial ribosomal protein bL19 family.

Its function is as follows. This protein is located at the 30S-50S ribosomal subunit interface and may play a role in the structure and function of the aminoacyl-tRNA binding site. This is Large ribosomal subunit protein bL19 from Symbiobacterium thermophilum (strain DSM 24528 / JCM 14929 / IAM 14863 / T).